A 396-amino-acid polypeptide reads, in one-letter code: MSEYSLFTSESVSEGHPDKIADQISDAVLDAIIAEDKFARVACETLVKTGVAIIAGEVTTTAWVDLEQIVRDVITDIGYTSSDVGFDGATCGVMNIIGKQSPDINQGVDRAKPEDQGAGDQGLMFGYASNETDVLMPAPITFSHQLVQRQAEARKSGLLPWLRPDAKSQVTCRYEGGKVVGIDAVVLSTQHNPDVSYADLREGVMELIVKHVLPAELLSKDTQFHINPTGQFIIGGPVGDCGLTGRKIIVDSYGGMARHGGGAFSGKDPSKVDRSAAYAGRYVAKNIVAAGLAERCEIQVSYAIGVAQPTSISLNTFGTGKISDDKIVKLVREIFDLRPYAITTMLDLLHPMYQETAAYGHFGRTPAQKTVGDDTFTTFTWEKTDRANDLRIAAGL.

Position 16 (histidine 16) interacts with ATP. A Mg(2+)-binding site is contributed by aspartate 18. Position 44 (glutamate 44) interacts with K(+). Residues glutamate 57 and glutamine 100 each coordinate L-methionine. The interval 100–110 (QSPDINQGVDR) is flexible loop. ATP is bound by residues 165-167 (DAK), aspartate 240, 246-247 (RK), alanine 263, and lysine 267. Aspartate 240 is an L-methionine binding site. Lysine 271 is a binding site for L-methionine.

Belongs to the AdoMet synthase family. In terms of assembly, homotetramer; dimer of dimers. Mg(2+) is required as a cofactor. Requires K(+) as cofactor.

The protein localises to the cytoplasm. The enzyme catalyses L-methionine + ATP + H2O = S-adenosyl-L-methionine + phosphate + diphosphate. The protein operates within amino-acid biosynthesis; S-adenosyl-L-methionine biosynthesis; S-adenosyl-L-methionine from L-methionine: step 1/1. Its function is as follows. Catalyzes the formation of S-adenosylmethionine (AdoMet) from methionine and ATP. The overall synthetic reaction is composed of two sequential steps, AdoMet formation and the subsequent tripolyphosphate hydrolysis which occurs prior to release of AdoMet from the enzyme. This chain is S-adenosylmethionine synthase, found in Pseudomonas fluorescens (strain SBW25).